We begin with the raw amino-acid sequence, 278 residues long: Putative B3 domain-containing protein At2g21920 (278 aa).

The segment at residues 168–275 (ISKTLSRTDV…KFIILNFEYN (108 aa)) is a DNA-binding region (TF-B3).

The protein localises to the nucleus. The polypeptide is Putative B3 domain-containing protein At2g21920 (Arabidopsis thaliana (Mouse-ear cress)).